A 148-amino-acid chain; its full sequence is HTH-type transcriptional regulator SarZ (148 aa).

An HTH marR-type domain is found at S9–S139. The segment at residues I55–K78 is a DNA-binding region (H-T-H motif).

It belongs to the SarZ family.

The protein resides in the cytoplasm. In terms of biological role, activates transcription of virulence factors alpha- and beta hemolysin genes (hla and hlb). Also, activates RNAIII expression, a central regulator transcribed from the agr locus. The polypeptide is HTH-type transcriptional regulator SarZ (sarZ) (Staphylococcus aureus (strain USA300)).